Reading from the N-terminus, the 219-residue chain is MOB kinase activator-like 1 (219 aa).

Residues cysteine 79, cysteine 84, histidine 161, and histidine 166 each coordinate Zn(2+).

Belongs to the MOB1/phocein family. As to quaternary structure, interacts with and activates trc and wts. Phosphorylated by wts/mats kinase complex. Activated by phosphorylation by Hippo (Hpo) kinase which increases its affinity and its ability to activate Warts (Wts) kinase. Ubiquitously expressed at low levels in developing tissues (at protein level).

Its subcellular location is the cytoplasm. It localises to the cytoskeleton. The protein resides in the microtubule organizing center. It is found in the centrosome. The protein localises to the nucleus. Its subcellular location is the cytosol. It localises to the cell membrane. Coactivator of Warts (Wts) kinase in the Hippo/SWH (Sav/Wts/Hpo)signaling pathway, a signaling pathway that plays a pivotal role in organ size control and tumor suppression by restricting proliferation and promoting apoptosis. The core of this pathway is composed of a kinase cascade wherein Hippo (Hpo), in complex with its regulatory protein Salvador (Sav), phosphorylates and activates Warts (Wts) in complex with its regulatory protein Mats, which in turn phosphorylates and inactivates the Yorkie (Yki)oncoprotein. The Hippo/SWH signaling pathway inhibits the activity of the transcriptional complex formed by Scalloped (sd) and Yki and the target genes of this pathway include cyclin-E (cycE), diap1 and bantam. Mats is essential for early development and is required for proper chromosomal segregation in developing embryos. In Drosophila melanogaster (Fruit fly), this protein is MOB kinase activator-like 1.